The following is a 514-amino-acid chain: GMP synthase [glutamine-hydrolyzing] (514 aa).

The Glutamine amidotransferase type-1 domain maps to 9 to 199 (KIIVLDFGSQ…ALNVCGCKGD (191 aa)). Catalysis depends on Cys86, which acts as the Nucleophile. Residues His173 and Glu175 contribute to the active site. Residues 200–389 (WTMENFSEVE…LGMPDAIVWR (190 aa)) enclose the GMPS ATP-PPase domain. 227–233 (SGGVDSS) is an ATP binding site.

Homodimer.

It catalyses the reaction XMP + L-glutamine + ATP + H2O = GMP + L-glutamate + AMP + diphosphate + 2 H(+). It functions in the pathway purine metabolism; GMP biosynthesis; GMP from XMP (L-Gln route): step 1/1. Functionally, catalyzes the synthesis of GMP from XMP. The chain is GMP synthase [glutamine-hydrolyzing] from Listeria monocytogenes serotype 4b (strain F2365).